Consider the following 310-residue polypeptide: Dehydrodolichyl diphosphate synthase 2 (310 aa).

This sequence belongs to the UPP synthase family. It depends on Mg(2+) as a cofactor.

Its pathway is protein modification; protein glycosylation. Catalyzes cis-prenyl chain elongation to produce the polyprenyl backbone of dolichol, a glycosyl carrier-lipid required for the biosynthesis of several classes of glycoprotein. This chain is Dehydrodolichyl diphosphate synthase 2, found in Arabidopsis thaliana (Mouse-ear cress).